The chain runs to 300 residues: Protoheme IX farnesyltransferase (300 aa).

Transmembrane regions (helical) follow at residues 28–48 (VVAL…PTIL), 50–70 (VQPL…AAAL), 100–120 (ALIF…VFTN), 122–142 (LTAW…TAYL), 149–169 (NIVI…TAVT), 176–196 (ALLL…ALAI), 222–242 (CILL…LVGM), 243–263 (SGPL…YKAW), and 280–300 (FSIY…YLWA).

This sequence belongs to the UbiA prenyltransferase family. Protoheme IX farnesyltransferase subfamily.

The protein localises to the cell inner membrane. It carries out the reaction heme b + (2E,6E)-farnesyl diphosphate + H2O = Fe(II)-heme o + diphosphate. Its pathway is porphyrin-containing compound metabolism; heme O biosynthesis; heme O from protoheme: step 1/1. Converts heme B (protoheme IX) to heme O by substitution of the vinyl group on carbon 2 of heme B porphyrin ring with a hydroxyethyl farnesyl side group. The polypeptide is Protoheme IX farnesyltransferase (Shewanella oneidensis (strain ATCC 700550 / JCM 31522 / CIP 106686 / LMG 19005 / NCIMB 14063 / MR-1)).